Reading from the N-terminus, the 332-residue chain is Formamidase (332 aa).

The region spanning 14–259 (FLTALIQYPV…WEIVTAEVYP (246 aa)) is the CN hydrolase domain. E60 acts as the Proton acceptor in catalysis. Catalysis depends on K132, which acts as the Proton donor. C165 acts as the Nucleophile in catalysis.

Belongs to the carbon-nitrogen hydrolase superfamily. Aliphatic amidase family.

It catalyses the reaction formamide + H2O = formate + NH4(+). Is an aliphatic amidase with a restricted substrate specificity, as it only hydrolyzes formamide. The sequence is that of Formamidase from Bacillus cereus (strain B4264).